We begin with the raw amino-acid sequence, 138 residues long: Acidic phospholipase A2 2 (138 aa).

An N-terminal signal peptide occupies residues 1 to 16 (MRTLWIVAVLLLGVEG). 7 disulfides stabilise this stretch: Cys-42–Cys-131, Cys-44–Cys-60, Cys-59–Cys-111, Cys-65–Cys-138, Cys-66–Cys-104, Cys-73–Cys-97, and Cys-91–Cys-102. Ca(2+) contacts are provided by Tyr-43, Gly-45, and Gly-47. His-63 is an active-site residue. Asp-64 provides a ligand contact to Ca(2+). Asp-105 is a catalytic residue.

The protein belongs to the phospholipase A2 family. Group II subfamily. D49 sub-subfamily. Ca(2+) serves as cofactor. As to expression, expressed by the venom gland.

The protein localises to the secreted. It carries out the reaction a 1,2-diacyl-sn-glycero-3-phosphocholine + H2O = a 1-acyl-sn-glycero-3-phosphocholine + a fatty acid + H(+). Functionally, snake venom phospholipase A2 (PLA2) that displays edema-inducing activities, exhibits indirect hemolytic activity, and inhibits ADP-induced platelet aggregation. PLA2 catalyzes the calcium-dependent hydrolysis of the 2-acyl groups in 3-sn-phosphoglycerides. This is Acidic phospholipase A2 2 from Protobothrops mucrosquamatus (Taiwan habu).